Consider the following 240-residue polypeptide: Zinc finger CCCH domain-containing protein 52 (240 aa).

2 disordered regions span residues 1-37 (MDAR…GLGS) and 81-106 (SQVS…PGSG). A C3H1-type 1 zinc finger spans residues 36 to 64 (GSKSKPCTKFFSTSGCPFGDNCHFLHYVP). A compositionally biased stretch (gly residues) spans 89–104 (GSGGPGGRFSGRGDPG). Positions 113 to 177 (ASTSKISVDA…EQINVASGMV (65 aa)) constitute a KH domain. The C3H1-type 2 zinc-finger motif lies at 205–232 (NYKTKICDRYSKGNCTYGDRCHFAHGES).

This is Zinc finger CCCH domain-containing protein 52 from Arabidopsis thaliana (Mouse-ear cress).